The following is a 689-amino-acid chain: Glycine--tRNA ligase beta subunit (689 aa).

It belongs to the class-II aminoacyl-tRNA synthetase family. As to quaternary structure, tetramer of two alpha and two beta subunits.

The protein resides in the cytoplasm. The enzyme catalyses tRNA(Gly) + glycine + ATP = glycyl-tRNA(Gly) + AMP + diphosphate. This Shewanella woodyi (strain ATCC 51908 / MS32) protein is Glycine--tRNA ligase beta subunit.